Reading from the N-terminus, the 397-residue chain is Leucine carboxyl methyltransferase 1 (397 aa).

The disordered stretch occupies residues A17–L61. A compositionally biased stretch (low complexity) spans P26–C43. The span at R44–P55 shows a compositional bias: basic residues. S-adenosyl-L-methionine contacts are provided by residues R119, G142, D168, D224–L225, and E259.

This sequence belongs to the methyltransferase superfamily. LCMT family.

It carries out the reaction [phosphatase 2A protein]-C-terminal L-leucine + S-adenosyl-L-methionine = [phosphatase 2A protein]-C-terminal L-leucine methyl ester + S-adenosyl-L-homocysteine. Functionally, methylates the carboxyl group of the C-terminal leucine residue of protein phosphatase 2A catalytic subunits to form alpha-leucine ester residues. This Cryptococcus neoformans var. neoformans serotype D (strain B-3501A) (Filobasidiella neoformans) protein is Leucine carboxyl methyltransferase 1 (PPM1).